The primary structure comprises 471 residues: Uronate isomerase (471 aa).

The protein belongs to the metallo-dependent hydrolases superfamily. Uronate isomerase family.

The enzyme catalyses D-glucuronate = D-fructuronate. The catalysed reaction is aldehydo-D-galacturonate = keto-D-tagaturonate. It functions in the pathway carbohydrate metabolism; pentose and glucuronate interconversion. In Xanthomonas campestris pv. campestris (strain B100), this protein is Uronate isomerase.